Here is a 124-residue protein sequence, read N- to C-terminus: UPF0382 membrane protein HI_1073 (124 aa).

Transmembrane regions (helical) follow at residues 6-26 (LTLV…AAHG), 70-90 (SMSS…ALAF), and 95-115 (VIVW…ISLA).

This sequence belongs to the UPF0382 family.

It is found in the cell membrane. In Haemophilus influenzae (strain ATCC 51907 / DSM 11121 / KW20 / Rd), this protein is UPF0382 membrane protein HI_1073.